We begin with the raw amino-acid sequence, 496 residues long: MDISISWVVIIVSVLSYLILMDKWRAAKLPKNIPPGPPKLPLIGHLHLLRGGLPQHLLRGITQKYGPVAHVQLGELFSVVLSSTEAARQAMKVLDPNFADRFVNIGSRIMWYDSEDIIFSRYNDHWRQIRKICVSELLSPKNVRSFGYIRQDEMASLIRLFESSEGKPVNVSEEISKTVCTIVSRVAFGSAVKDQSLLLNLVKESLRMASGFELADLFPSSWLLNLLCFNKYRLWRMRARLDNFLDGFLEEHRVKKSGEFGGEDIIDVLYRMQKDSQMKVPITNNGIKGFIYDVFSAGTDTSAATILWALSELMRYPEKMAKAQAEVRESLKGKTNVDLTEVHELKYLRSVVKEALRLHPPFPMIPRLCVQESEVTGYTIPANTRILINVWSIGRDPLYWEDPDTFNPDRYDEVPRDIIGNDFELIPFGSGRRICPGLHFGLANIEVPLAQLLYHFDWKLPPGMTAADIDMTEKTGLSGPRKNPLILVPIIHNPTS.

The chain crosses the membrane as a helical; Signal-anchor for type II membrane protein span at residues 1 to 21; it reads MDISISWVVIIVSVLSYLILM. Heme is bound at residue cysteine 435.

The protein belongs to the cytochrome P450 family. The cofactor is heme.

It is found in the membrane. It participates in secondary metabolite biosynthesis; terpenoid biosynthesis. Its function is as follows. Involved in the biosynthesis of phenolic monoterpenes natural products thymol and carvacrol which have a broad range of biological activities acting as antimicrobial compounds, insecticides, antioxidants and pharmaceutical agents. Catalyzes probably the C3-hydroxylation of gamma-terpinene to produce thymol. This is Cytochrome P450 71D179 from Thymus vulgaris (Thyme).